We begin with the raw amino-acid sequence, 485 residues long: Zinc finger protein 165 (485 aa).

Lys-23 participates in a covalent cross-link: Glycyl lysine isopeptide (Lys-Gly) (interchain with G-Cter in SUMO2). The SCAN box domain maps to 62–127; it reads GPREALSRLR…EEAVTILEDL (66 aa). Glycyl lysine isopeptide (Lys-Gly) (interchain with G-Cter in SUMO2) cross-links involve residues Lys-162 and Lys-195. The segment at 290–314 adopts a C2H2-type 1; degenerate zinc-finger fold; that stretch reads KSCKHGTCDQSFKWNSDFINHQIIY. C2H2-type zinc fingers lie at residues 344 to 366, 372 to 394, 400 to 422, 428 to 450, and 456 to 478; these read HQCN…QRIH, YECN…RRIH, FGCK…QRIH, YECS…FRIH, and YECS…QRIH.

It belongs to the krueppel C2H2-type zinc-finger protein family. Expressed specifically in testis.

It is found in the nucleus. In terms of biological role, may be involved in transcriptional regulation. In Homo sapiens (Human), this protein is Zinc finger protein 165 (ZNF165).